The chain runs to 362 residues: EARP-interacting protein 1 (362 aa).

4 WD repeats span residues 61-108 (HPAG…RTLE), 206-246 (AHIH…SALT), 250-290 (PHAH…SEQQ), and 319-359 (EHED…KYAL).

This sequence belongs to the WD repeat EIPR1 family. As to expression, expressed in the hypodermis and the pharynx.

It localises to the cytoplasm. In terms of biological role, plays a role in the trafficking of cargo to dense-core vesicles, probably through association with the endosome-associated recycling protein (EARP) complex. Important for neuronal function. In Caenorhabditis elegans, this protein is EARP-interacting protein 1.